The following is a 418-amino-acid chain: Fumarylacetoacetase (418 aa).

Asp127 contributes to the Ca(2+) binding site. His134 serves as the catalytic Proton acceptor. Ca(2+) contacts are provided by Glu200, Glu202, and Asp235. The Mg(2+) site is built by Asp235, Lys255, and Thr259.

The protein belongs to the FAH family. Ca(2+) is required as a cofactor. It depends on Mg(2+) as a cofactor. Highly expressed in the intestine and the hypodermis.

The catalysed reaction is 4-fumarylacetoacetate + H2O = acetoacetate + fumarate + H(+). It participates in amino-acid degradation; L-phenylalanine degradation; acetoacetate and fumarate from L-phenylalanine: step 6/6. In terms of biological role, fumarylacetoacetase involved in the tyrosine degradation pathway. The polypeptide is Fumarylacetoacetase (Caenorhabditis elegans).